A 246-amino-acid chain; its full sequence is Enolase-phosphatase E1 (246 aa).

Residues aspartate 11 and glutamate 13 each coordinate Mg(2+). Residues 140–141 and lysine 174 contribute to the substrate site; that span reads SS. Aspartate 199 is a binding site for Mg(2+).

The protein belongs to the HAD-like hydrolase superfamily. MasA/MtnC family. In terms of assembly, monomer. The cofactor is Mg(2+).

The protein localises to the cytoplasm. It localises to the nucleus. The catalysed reaction is 5-methylsulfanyl-2,3-dioxopentyl phosphate + H2O = 1,2-dihydroxy-5-(methylsulfanyl)pent-1-en-3-one + phosphate. It functions in the pathway amino-acid biosynthesis; L-methionine biosynthesis via salvage pathway; L-methionine from S-methyl-5-thio-alpha-D-ribose 1-phosphate: step 3/6. The protein operates within amino-acid biosynthesis; L-methionine biosynthesis via salvage pathway; L-methionine from S-methyl-5-thio-alpha-D-ribose 1-phosphate: step 4/6. Its function is as follows. Bifunctional enzyme that catalyzes the enolization of 2,3-diketo-5-methylthiopentyl-1-phosphate (DK-MTP-1-P) into the intermediate 2-hydroxy-3-keto-5-methylthiopentenyl-1-phosphate (HK-MTPenyl-1-P), which is then dephosphorylated to form the acireductone 1,2-dihydroxy-3-keto-5-methylthiopentene (DHK-MTPene). This chain is Enolase-phosphatase E1, found in Acyrthosiphon pisum (Pea aphid).